A 187-amino-acid chain; its full sequence is Protein GrpE (187 aa).

The tract at residues 1-26 is disordered; that stretch reads MHDPKESLETNIQETESQEKLPETPI.

Belongs to the GrpE family. Homodimer.

Its subcellular location is the cytoplasm. In terms of biological role, participates actively in the response to hyperosmotic and heat shock by preventing the aggregation of stress-denatured proteins, in association with DnaK and GrpE. It is the nucleotide exchange factor for DnaK and may function as a thermosensor. Unfolded proteins bind initially to DnaJ; upon interaction with the DnaJ-bound protein, DnaK hydrolyzes its bound ATP, resulting in the formation of a stable complex. GrpE releases ADP from DnaK; ATP binding to DnaK triggers the release of the substrate protein, thus completing the reaction cycle. Several rounds of ATP-dependent interactions between DnaJ, DnaK and GrpE are required for fully efficient folding. The chain is Protein GrpE from Dichelobacter nodosus (strain VCS1703A).